A 420-amino-acid chain; its full sequence is Glutamate-1-semialdehyde 2,1-aminomutase (420 aa).

Lys-259 is modified (N6-(pyridoxal phosphate)lysine).

This sequence belongs to the class-III pyridoxal-phosphate-dependent aminotransferase family. HemL subfamily. Pyridoxal 5'-phosphate is required as a cofactor.

It localises to the cytoplasm. It catalyses the reaction (S)-4-amino-5-oxopentanoate = 5-aminolevulinate. It participates in porphyrin-containing compound metabolism; protoporphyrin-IX biosynthesis; 5-aminolevulinate from L-glutamyl-tRNA(Glu): step 2/2. In Methanothermobacter thermautotrophicus (strain ATCC 29096 / DSM 1053 / JCM 10044 / NBRC 100330 / Delta H) (Methanobacterium thermoautotrophicum), this protein is Glutamate-1-semialdehyde 2,1-aminomutase (hemL).